The following is a 115-amino-acid chain: Putative membrane protein insertion efficiency factor (115 aa).

This sequence belongs to the UPF0161 family.

The protein localises to the cell membrane. Could be involved in insertion of integral membrane proteins into the membrane. The chain is Putative membrane protein insertion efficiency factor from Mycobacterium avium (strain 104).